A 426-amino-acid polypeptide reads, in one-letter code: Protein prenyltransferase alpha subunit repeat-containing protein 1 (426 aa).

4 PFTA repeats span residues alanine 86–proline 119, lysine 121–cysteine 154, glutamate 180–asparagine 213, and aspartate 219–leucine 252. Residues alanine 255 to histidine 279 are disordered. Residues threonine 262–serine 275 are compositionally biased toward polar residues. Residues glutamate 290–arginine 323 form a PFTA 5 repeat.

Belongs to the protein prenyltransferase subunit alpha family.

The sequence is that of Protein prenyltransferase alpha subunit repeat-containing protein 1 (ptar1) from Danio rerio (Zebrafish).